Consider the following 234-residue polypeptide: (5-formylfuran-3-yl)methyl phosphate synthase (234 aa).

Lys-27 acts as the Schiff-base intermediate with substrate in catalysis. Lys-85 (proton acceptor) is an active-site residue.

Belongs to the MfnB family.

It carries out the reaction 2 D-glyceraldehyde 3-phosphate = 4-(hydroxymethyl)-2-furancarboxaldehyde phosphate + phosphate + 2 H2O. The protein operates within cofactor biosynthesis; methanofuran biosynthesis. In terms of biological role, catalyzes the formation of 4-(hydroxymethyl)-2-furancarboxaldehyde phosphate (4-HFC-P) from two molecules of glyceraldehyde-3-P (GA-3-P). This Methanosarcina acetivorans (strain ATCC 35395 / DSM 2834 / JCM 12185 / C2A) protein is (5-formylfuran-3-yl)methyl phosphate synthase.